A 718-amino-acid chain; its full sequence is Pentatricopeptide repeat-containing protein At1g22960, mitochondrial (718 aa).

A mitochondrion-targeting transit peptide spans 1–11; sequence MILCLRLCLRA. PPR repeat units lie at residues 167–201, 202–236, 237–271, 272–306, 307–341, 342–372, 373–407, 408–442, 443–477, 478–512, 514–548, 549–583, 584–618, 619–653, and 654–688; these read ALKLLDLLLWVYTKKSMAEKFLLSFEKMIRKGFLP, SVRNCNIVLKVLRDSRMMNKASAVYETMIEHGIMP, TVITFNTMLDSCFKAGDLERVDKIWLEMKRRNIEF, SEVTYNILINGFSKNGKMEEARRFHGDMRRSGFAV, TPYSFNPLIEGYCKQGLFDDAWGVTDEMLNAGIYP, TTSTYNIYICALCDFGRIDDARELLSSMAAP, DVVSYNTLMHGYIKMGKFVEASLLFDDLRAGDIHP, SIVTYNTLIDGLCESGNLEGAQRLKEEMTTQLIFP, DVITYTTLVKGFVKNGNLSMATEVYDEMLRKGIKP, DGYAYTTRAVGELRLGDSDKAFRLHEEMVATDHHA, DLTIYNVRIDGLCKVGNLVKAIEFQRKIFRVGLVP, DHVTYTTVIRGYLENGQFKMARNLYDEMLRKRLYP, SVITYFVLIYGHAKAGRLEQAFQYSTEMKKRGVRP, NVMTHNALLYGMCKAGNIDEAYRYLCKMEEEGIPP, and NKYSYTMLISKNCDFEKWEEVVKLYKEMLDKEIEP.

The protein belongs to the PPR family. P subfamily.

It is found in the mitochondrion. This is Pentatricopeptide repeat-containing protein At1g22960, mitochondrial from Arabidopsis thaliana (Mouse-ear cress).